Consider the following 1324-residue polypeptide: MTKFHVKLYAKAVESRKLDQIQKDFEKKFNRKIDVSVEYCYHVITQEPELISSNWEKLVTLLSHSPFETSVWKESQLHPEHGKNIEIGPRTAVKTAACTNILSIFESSGIKNVERIERGIRYLVEDDVDVNEFFEIAADKMTEAIYGNDVKFDDESHQIEKVFLIDVLESKQNLIKANEELGLALDQLDLDFYYDFFVNKVKKNPTDVELFDLAQSDSEHSRHWFFRGEIWIDDRKRDGSLMKTIRETLDSSNDNSLIAFCDNSSAIRGFESVCRLRPNDPTTVSPMIAIFPPSHLIYSAETHNFPTAVCPFQGATTGTGGRIRDIHATGRGAYEIAGTVGYSFGNLNLPGLPLPWEDETFEYPTSISEPAKIAIEASNGASDYGNKFGEPVISGFARSFGQRLENGERCEYLKPIMFSGGIGAIDKDEVRKEPCAPHQKVVKIGGPVYRIGVGGGAASSVSVQGNRENQLDFAAVQRGDAEMGGKLHRVVRACAERIGGNPLMAIHDQGAGGNGNVIKELVEGCGVTVKSDTFQLGDESISLRELWTAEYQENDAALVDASLLDALQTISKREKCHVSVVGEVEKEQRVKLLGKSGEIAVDLDTRQLGEREKKVFKLKSAPRVLKKLELPENLTVRKALKRVLMLPSVASKRYLTCKVDRSVTGLVAQQQCVGPLHTPLADVAVVALSHFDTVGGAVSLGEQPIKMLIDAEKGARMCIAETIMNLIWAPITDLKDVKMSGNWMWAAKCDGEGARLVDAVGALCRGLREIGCAIDGGKDSLSMAVTAHGEVVKSPGTLVLSAYAPCTNVTKVVNPSLKAVPGSKILWIKIGSSEEKMRLGGSALAQVYSQIGDDCPDIENFSEISKVFSIVQQLLNREELAGPLRKPIILAGHDISDGGLLTAILEMAFAGNVSIDIDIKPPNQNIKPIDILFAEECGILLEVSNPENVLHIFSEAGIKCQEIGKASAVFGPDAHVKIHVNGHLEINEKLVDLREEWELVGDRLGEFQTNPKSLKEAREVRRTCQKINYKCDFDWYYNPAFIHNEQYFSTAPRVAIIREEGSNGDREMASAFTLAGFQTFDVTMTDILAGHTLEAYRGVAFVGGFSYADVLGSAKGWAAGVQFNESVSKQFEAFRSRPDTFSYGVCNGCQLMAQLGWIGDEEQKGPTVFLDENECGRFDSSFGPVKIEKNVSIMLSGMENSVLGLWSSHGEGRFTYRNLQNFQNLKTNGQVCIRFCDDRGMTGADHGSVKLPYPWNPNGSIDDVAAICSRDGRHLAMMPHADRSFLTWQWAESSEVPWNARFDQKTVALSPWIKMFRNAYNWCL.

Residues 314–325 (GATTGTGGRIRD), 394–396 (SGF), and Ala681 contribute to the ATP site. 4 residues coordinate Mg(2+): Asp682, Glu721, Asn725, and Asp894. Residue Ser896 participates in ATP binding. Residues 1053 to 1295 (RVAIIREEGS…LTWQWAESSE (243 aa)) form the Glutamine amidotransferase type-1 domain. Cys1146 (nucleophile) is an active-site residue. Active-site residues include His1280 and Asp1282.

The protein in the N-terminal section; belongs to the FGAMS family.

The protein resides in the cytoplasm. It carries out the reaction N(2)-formyl-N(1)-(5-phospho-beta-D-ribosyl)glycinamide + L-glutamine + ATP + H2O = 2-formamido-N(1)-(5-O-phospho-beta-D-ribosyl)acetamidine + L-glutamate + ADP + phosphate + H(+). Its pathway is purine metabolism; IMP biosynthesis via de novo pathway; 5-amino-1-(5-phospho-D-ribosyl)imidazole from N(2)-formyl-N(1)-(5-phospho-D-ribosyl)glycinamide: step 1/2. Functionally, phosphoribosylformylglycinamidine synthase involved in the purines biosynthetic pathway. Catalyzes the ATP-dependent conversion of formylglycinamide ribonucleotide (FGAR) and glutamine to yield formylglycinamidine ribonucleotide (FGAM) and glutamate. This Caenorhabditis elegans protein is Probable phosphoribosylformylglycinamidine synthase.